A 499-amino-acid polypeptide reads, in one-letter code: Glutamate--tRNA ligase (499 aa).

The short motif at 12–22 is the 'HIGH' region element; it reads PSPTGHLHIGN. The 'KMSKS' region motif lies at 259-263; that stretch reads KLSKR. Lys262 is an ATP binding site.

Belongs to the class-I aminoacyl-tRNA synthetase family. Glutamate--tRNA ligase type 1 subfamily. Monomer.

Its subcellular location is the cytoplasm. It carries out the reaction tRNA(Glu) + L-glutamate + ATP = L-glutamyl-tRNA(Glu) + AMP + diphosphate. Catalyzes the attachment of glutamate to tRNA(Glu) in a two-step reaction: glutamate is first activated by ATP to form Glu-AMP and then transferred to the acceptor end of tRNA(Glu). The protein is Glutamate--tRNA ligase of Lactobacillus acidophilus (strain ATCC 700396 / NCK56 / N2 / NCFM).